The primary structure comprises 240 residues: UDP-2,3-diacylglucosamine hydrolase (240 aa).

Mn(2+) is bound by residues aspartate 8, histidine 10, aspartate 41, asparagine 79, and histidine 114. 79–80 is a binding site for substrate; sequence NR. The substrate site is built by aspartate 122, serine 160, asparagine 164, lysine 167, and histidine 195. Mn(2+) is bound by residues histidine 195 and histidine 197.

Belongs to the LpxH family. Mn(2+) is required as a cofactor.

It is found in the cell inner membrane. The enzyme catalyses UDP-2-N,3-O-bis[(3R)-3-hydroxytetradecanoyl]-alpha-D-glucosamine + H2O = 2-N,3-O-bis[(3R)-3-hydroxytetradecanoyl]-alpha-D-glucosaminyl 1-phosphate + UMP + 2 H(+). It participates in glycolipid biosynthesis; lipid IV(A) biosynthesis; lipid IV(A) from (3R)-3-hydroxytetradecanoyl-[acyl-carrier-protein] and UDP-N-acetyl-alpha-D-glucosamine: step 4/6. Hydrolyzes the pyrophosphate bond of UDP-2,3-diacylglucosamine to yield 2,3-diacylglucosamine 1-phosphate (lipid X) and UMP by catalyzing the attack of water at the alpha-P atom. Involved in the biosynthesis of lipid A, a phosphorylated glycolipid that anchors the lipopolysaccharide to the outer membrane of the cell. This Photorhabdus laumondii subsp. laumondii (strain DSM 15139 / CIP 105565 / TT01) (Photorhabdus luminescens subsp. laumondii) protein is UDP-2,3-diacylglucosamine hydrolase.